The following is a 162-amino-acid chain: UPF0114 protein Sfri_3655 (162 aa).

A run of 3 helical transmembrane segments spans residues 15-35 (IMAP…IKFF), 53-73 (LVLI…LIMV), and 136-156 (IMWY…MGYL).

The protein belongs to the UPF0114 family.

The protein localises to the cell membrane. The polypeptide is UPF0114 protein Sfri_3655 (Shewanella frigidimarina (strain NCIMB 400)).